We begin with the raw amino-acid sequence, 173 residues long: Adenine phosphoribosyltransferase (173 aa).

It belongs to the purine/pyrimidine phosphoribosyltransferase family. Homodimer.

It localises to the cytoplasm. It carries out the reaction AMP + diphosphate = 5-phospho-alpha-D-ribose 1-diphosphate + adenine. The protein operates within purine metabolism; AMP biosynthesis via salvage pathway; AMP from adenine: step 1/1. Its function is as follows. Catalyzes a salvage reaction resulting in the formation of AMP, that is energically less costly than de novo synthesis. The sequence is that of Adenine phosphoribosyltransferase from Macrococcus caseolyticus (strain JCSC5402) (Macrococcoides caseolyticum).